The following is a 21-amino-acid chain: Dahlein-5.6 (21 aa).

As to expression, expressed by the skin dorsal glands.

The protein localises to the secreted. Its function is as follows. Has no antimicrobial activity. Strongly inhibits the formation of NO by neuronal nitric oxide synthase at micromolar concentrations. The polypeptide is Dahlein-5.6 (Ranoidea dahlii (Dahl's aquatic frog)).